A 1057-amino-acid polypeptide reads, in one-letter code: Exportin-1 (1057 aa).

One can recognise an Importin N-terminal domain in the interval 36-102 (AQMVLGKFQE…KNYIVSLIIR (67 aa)). HEAT repeat units follow at residues 239 to 275 (AEPSKLVKLLLHKYFPEPLFRNSTLKCLTEIGNLNLG), 281 to 321 (AVFI…FIHT), 462 to 501 (NTQHIMLEKLQTLISGREFTFQRLNTLCWAIGSISGAQNK), 506 to 544 (RFLVTVIKDLLELCQNKKGKDNKAVIASDIMYIVGQYPR), 551 to 588 (KFLKTVVNKLFEFMHESHPGVQDMACDTFLKISKQCKR), 596 to 633 (EESQPFINELLNQLSTTIAHLEQSQIHTFYEAVGYMIA), 739 to 776 (KETLKLLETFIEKSSDKQVIYSNFLQPLLEAVLGDYRT), 781 to 818 (TRDPEVLSLMTAIITSLKQLVHPEVPKILEAVFETTLS), 855 to 892 (QQFKLLIDCVVWAFKHTERNISETGLHILKELIENVSK), 902 to 925 (KTYLVSLLNDILYILTDSFHKSGF), and 926 to 965 (ALECDILRMMFQVVENGVVKIPLFDPQQANFPSNSEYVKE).

This sequence belongs to the exportin family. Component of a nuclear export receptor complex.

The protein localises to the nucleus. The protein resides in the cytoplasm. Its subcellular location is the perinuclear region. Functionally, mediates the nuclear export of cellular proteins (cargos) bearing a leucine-rich nuclear export signal (NES). The sequence is that of Exportin-1 (xpo1) from Dictyostelium discoideum (Social amoeba).